Reading from the N-terminus, the 327-residue chain is GMP reductase (327 aa).

Catalysis depends on cysteine 176, which acts as the Thioimidate intermediate. 205-228 (IIADGGIRTHGDIAKSIRFGASMV) is a binding site for NADP(+).

This sequence belongs to the IMPDH/GMPR family. GuaC type 2 subfamily.

It carries out the reaction IMP + NH4(+) + NADP(+) = GMP + NADPH + 2 H(+). Catalyzes the irreversible NADPH-dependent deamination of GMP to IMP. It functions in the conversion of nucleobase, nucleoside and nucleotide derivatives of G to A nucleotides, and in maintaining the intracellular balance of A and G nucleotides. This Streptococcus pyogenes serotype M6 (strain ATCC BAA-946 / MGAS10394) protein is GMP reductase.